The sequence spans 164 residues: Phosphopantetheine adenylyltransferase (164 aa).

Residue S9 participates in substrate binding. Residues 9–10 (SF) and H17 each bind ATP. Substrate contacts are provided by K41, L73, and K87. Residues 88–90 (GLR), E98, and 123–129 (HSFLSSS) contribute to the ATP site.

It belongs to the bacterial CoaD family. In terms of assembly, homohexamer. Requires Mg(2+) as cofactor.

It is found in the cytoplasm. It catalyses the reaction (R)-4'-phosphopantetheine + ATP + H(+) = 3'-dephospho-CoA + diphosphate. Its pathway is cofactor biosynthesis; coenzyme A biosynthesis; CoA from (R)-pantothenate: step 4/5. Its function is as follows. Reversibly transfers an adenylyl group from ATP to 4'-phosphopantetheine, yielding dephospho-CoA (dPCoA) and pyrophosphate. This Rubrobacter xylanophilus (strain DSM 9941 / JCM 11954 / NBRC 16129 / PRD-1) protein is Phosphopantetheine adenylyltransferase.